The following is a 647-amino-acid chain: DNA ligase (647 aa).

Residues 30 to 34 (DEEYD), 79 to 80 (SM), and E105 each bind NAD(+). Residue K107 is the N6-AMP-lysine intermediate of the active site. NAD(+)-binding residues include R128, E162, and K301. Residues C395, C398, C411, and C416 each contribute to the Zn(2+) site. Residues 570 to 647 (KSDGVIFGKT…ESAFNELVKE (78 aa)) form the BRCT domain.

The protein belongs to the NAD-dependent DNA ligase family. LigA subfamily. It depends on Mg(2+) as a cofactor. The cofactor is Mn(2+).

The enzyme catalyses NAD(+) + (deoxyribonucleotide)n-3'-hydroxyl + 5'-phospho-(deoxyribonucleotide)m = (deoxyribonucleotide)n+m + AMP + beta-nicotinamide D-nucleotide.. Its function is as follows. DNA ligase that catalyzes the formation of phosphodiester linkages between 5'-phosphoryl and 3'-hydroxyl groups in double-stranded DNA using NAD as a coenzyme and as the energy source for the reaction. It is essential for DNA replication and repair of damaged DNA. The sequence is that of DNA ligase from Campylobacter jejuni (strain RM1221).